The primary structure comprises 124 residues: Small ribosomal subunit protein uS13 (124 aa).

The tract at residues 99 to 124 (RGQRTRTNARTRKGPRKTVGVMRKKS) is disordered. The span at 101–124 (QRTRTNARTRKGPRKTVGVMRKKS) shows a compositional bias: basic residues.

It belongs to the universal ribosomal protein uS13 family. In terms of assembly, part of the 30S ribosomal subunit. Forms a loose heterodimer with protein S19. Forms two bridges to the 50S subunit in the 70S ribosome.

In terms of biological role, located at the top of the head of the 30S subunit, it contacts several helices of the 16S rRNA. In the 70S ribosome it contacts the 23S rRNA (bridge B1a) and protein L5 of the 50S subunit (bridge B1b), connecting the 2 subunits; these bridges are implicated in subunit movement. Contacts the tRNAs in the A and P-sites. This chain is Small ribosomal subunit protein uS13, found in Caldicellulosiruptor bescii (strain ATCC BAA-1888 / DSM 6725 / KCTC 15123 / Z-1320) (Anaerocellum thermophilum).